We begin with the raw amino-acid sequence, 422 residues long: Roquefortine prenyltransferase roqD (422 aa).

Glu100 serves as a coordination point for substrate. The dimethylallyl diphosphate site is built by Arg113, Lys200, and Tyr202. A substrate-binding site is contributed by Tyr204. 5 residues coordinate dimethylallyl diphosphate: Lys268, Tyr270, Tyr353, Tyr416, and Tyr420.

Belongs to the tryptophan dimethylallyltransferase family.

It functions in the pathway alkaloid biosynthesis. In terms of biological role, roquefortine prenyltransferase; part of the gene cluster that mediates the biosynthesis of the mycotoxins roquefortine C and meleagrin. The first stage is catalyzed by the dipeptide synthase roqA which condenses histidine and tryptophan to produce histidyltryptophanyldiketopiperazine (HTD). HTD is then converted to roquefortine C through two possible pathways. In the first pathway, prenyltransferase roqD transforms HTD to the intermediate roquefortine D, which is in turn converted to roquefortine C by the cytochrome P450 monooxygenase roqR. In the second pathway, HTD is first converted to the intermediate dehydrohistidyltryptophanyldi-ketopiperazine (DHTD) by roqR which is then prenylated by roqD to form roquefortine C. Roquefortine C can be further transformed to meleagrin via three more reactions including oxydation to glandicolin A by roqM, which is further reduced to glandicoline B by roqO. Finally, glandicoline B is converted to meleagrin by the glandicoline B O-methyltransferase roqN. More studies identified further branching and additional metabolites produced by the roquefortine/meleagrin cluster, including roquefortine F, roquefortine L, roquefortine M, roquefortine N and neoxaline. The sequence is that of Roquefortine prenyltransferase roqD from Penicillium rubens (strain ATCC 28089 / DSM 1075 / NRRL 1951 / Wisconsin 54-1255) (Penicillium chrysogenum).